Reading from the N-terminus, the 237-residue chain is Ribonuclease PH (237 aa).

Phosphate-binding positions include Arg-86 and Gly-124–Arg-126.

Belongs to the RNase PH family. Homohexameric ring arranged as a trimer of dimers.

The enzyme catalyses tRNA(n+1) + phosphate = tRNA(n) + a ribonucleoside 5'-diphosphate. Its function is as follows. Phosphorolytic 3'-5' exoribonuclease that plays an important role in tRNA 3'-end maturation. Removes nucleotide residues following the 3'-CCA terminus of tRNAs; can also add nucleotides to the ends of RNA molecules by using nucleoside diphosphates as substrates, but this may not be physiologically important. Probably plays a role in initiation of 16S rRNA degradation (leading to ribosome degradation) during starvation. The chain is Ribonuclease PH from Idiomarina loihiensis (strain ATCC BAA-735 / DSM 15497 / L2-TR).